The primary structure comprises 446 residues: Glutamyl-tRNA reductase (446 aa).

Substrate is bound by residues 49–52 (TCNR), S107, 112–114 (EPQ), and Q118. C50 serves as the catalytic Nucleophile. 187–192 (GAGETI) contributes to the NADP(+) binding site. Residues 417 to 446 (NANEDTRESVDKEQTGTTQGAARGDQRSTG) form a disordered region. The segment covering 420–430 (EDTRESVDKEQ) has biased composition (basic and acidic residues).

This sequence belongs to the glutamyl-tRNA reductase family. As to quaternary structure, homodimer.

It catalyses the reaction (S)-4-amino-5-oxopentanoate + tRNA(Glu) + NADP(+) = L-glutamyl-tRNA(Glu) + NADPH + H(+). Its pathway is porphyrin-containing compound metabolism; protoporphyrin-IX biosynthesis; 5-aminolevulinate from L-glutamyl-tRNA(Glu): step 1/2. Functionally, catalyzes the NADPH-dependent reduction of glutamyl-tRNA(Glu) to glutamate 1-semialdehyde (GSA). The chain is Glutamyl-tRNA reductase from Alkalilimnicola ehrlichii (strain ATCC BAA-1101 / DSM 17681 / MLHE-1).